Here is a 408-residue protein sequence, read N- to C-terminus: Imidazolonepropionase (408 aa).

Residues His73 and His75 each coordinate Fe(3+). Positions 73 and 75 each coordinate Zn(2+). Residues Arg82, Tyr145, and His178 each coordinate 4-imidazolone-5-propanoate. Tyr145 is a binding site for N-formimidoyl-L-glutamate. His243 is a binding site for Fe(3+). His243 contributes to the Zn(2+) binding site. Gln246 contributes to the 4-imidazolone-5-propanoate binding site. Fe(3+) is bound at residue Asp318. Asp318 is a Zn(2+) binding site. N-formimidoyl-L-glutamate contacts are provided by Asn320 and Gly322. Residue Ser323 participates in 4-imidazolone-5-propanoate binding.

Belongs to the metallo-dependent hydrolases superfamily. HutI family. Zn(2+) serves as cofactor. It depends on Fe(3+) as a cofactor.

The protein resides in the cytoplasm. It carries out the reaction 4-imidazolone-5-propanoate + H2O = N-formimidoyl-L-glutamate. It participates in amino-acid degradation; L-histidine degradation into L-glutamate; N-formimidoyl-L-glutamate from L-histidine: step 3/3. Catalyzes the hydrolytic cleavage of the carbon-nitrogen bond in imidazolone-5-propanoate to yield N-formimidoyl-L-glutamate. It is the third step in the universal histidine degradation pathway. The chain is Imidazolonepropionase from Shewanella sp. (strain MR-4).